We begin with the raw amino-acid sequence, 1012 residues long: DNA polymerase catalytic subunit (1012 aa).

The protein belongs to the DNA polymerase type-B family.

The protein resides in the host nucleus. The catalysed reaction is DNA(n) + a 2'-deoxyribonucleoside 5'-triphosphate = DNA(n+1) + diphosphate. Replicates viral genomic DNA. The chain is DNA polymerase catalytic subunit (U38) from Human herpesvirus 6B (strain Z29) (HHV-6 variant B).